The sequence spans 209 residues: COP9 signalosome complex subunit 8 (209 aa).

One can recognise a PCI domain in the interval 8–179 (DNAFSFRKLL…GTLDVSLNRF (172 aa)). Residue serine 175 is modified to Phosphoserine.

The protein belongs to the CSN8 family. In terms of assembly, component of the CSN complex, composed of COPS1/GPS1, COPS2, COPS3, COPS4, COPS5, COPS6, COPS7 (COPS7A or COPS7B), COPS8 and COPS9. In the complex, it probably interacts directly with COPS3, COPS4 and COPS7 (COPS7A or COPS7B). In terms of tissue distribution, widely expressed.

The protein localises to the cytoplasm. Its subcellular location is the nucleus. Its function is as follows. Component of the COP9 signalosome complex (CSN), a complex involved in various cellular and developmental processes. The CSN complex is an essential regulator of the ubiquitin (Ubl) conjugation pathway by mediating the deneddylation of the cullin subunits of SCF-type E3 ligase complexes, leading to decrease the Ubl ligase activity of SCF-type complexes such as SCF, CSA or DDB2. The complex is also involved in phosphorylation of p53/TP53, c-jun/JUN, IkappaBalpha/NFKBIA, ITPK1 and IRF8/ICSBP, possibly via its association with CK2 and PKD kinases. CSN-dependent phosphorylation of TP53 and JUN promotes and protects degradation by the Ubl system, respectively. The protein is COP9 signalosome complex subunit 8 (Cops8) of Mus musculus (Mouse).